We begin with the raw amino-acid sequence, 364 residues long: DNA replication and repair protein RecF (364 aa).

30–37 (GENGSGKT) contacts ATP.

Belongs to the RecF family.

It localises to the cytoplasm. In terms of biological role, the RecF protein is involved in DNA metabolism; it is required for DNA replication and normal SOS inducibility. RecF binds preferentially to single-stranded, linear DNA. It also seems to bind ATP. The chain is DNA replication and repair protein RecF from Pseudoalteromonas translucida (strain TAC 125).